The primary structure comprises 201 residues: Adenylyl-sulfate kinase (201 aa).

An ATP-binding site is contributed by Gly35–Ser42. Ser109 acts as the Phosphoserine intermediate in catalysis.

This sequence belongs to the APS kinase family.

The catalysed reaction is adenosine 5'-phosphosulfate + ATP = 3'-phosphoadenylyl sulfate + ADP + H(+). It functions in the pathway sulfur metabolism; hydrogen sulfide biosynthesis; sulfite from sulfate: step 2/3. Functionally, catalyzes the synthesis of activated sulfate. The protein is Adenylyl-sulfate kinase of Bacteroides thetaiotaomicron (strain ATCC 29148 / DSM 2079 / JCM 5827 / CCUG 10774 / NCTC 10582 / VPI-5482 / E50).